The following is a 56-amino-acid chain: Large ribosomal subunit protein bL33 (56 aa).

Belongs to the bacterial ribosomal protein bL33 family.

This Rickettsia prowazekii (strain Madrid E) protein is Large ribosomal subunit protein bL33 (rpmG).